Here is a 126-residue protein sequence, read N- to C-terminus: Ribosome-binding factor A (126 aa).

Belongs to the RbfA family. Monomer. Binds 30S ribosomal subunits, but not 50S ribosomal subunits or 70S ribosomes.

The protein resides in the cytoplasm. One of several proteins that assist in the late maturation steps of the functional core of the 30S ribosomal subunit. Associates with free 30S ribosomal subunits (but not with 30S subunits that are part of 70S ribosomes or polysomes). Required for efficient processing of 16S rRNA. May interact with the 5'-terminal helix region of 16S rRNA. In Histophilus somni (strain 129Pt) (Haemophilus somnus), this protein is Ribosome-binding factor A.